A 603-amino-acid polypeptide reads, in one-letter code: Adenine deaminase (603 aa).

This sequence belongs to the metallo-dependent hydrolases superfamily. Adenine deaminase family. As to quaternary structure, homodimer. Mn(2+) serves as cofactor.

The enzyme catalyses adenine + H2O + H(+) = hypoxanthine + NH4(+). In Klebsiella pneumoniae (strain 342), this protein is Adenine deaminase.